A 354-amino-acid chain; its full sequence is 3-isopropylmalate dehydrogenase (354 aa).

76-87 lines the NAD(+) pocket; the sequence is GPRWDSAKERPE. Arg94, Arg104, Arg130, and Asp215 together coordinate substrate. Mg(2+) is bound by residues Asp215, Asp239, and Asp243. 273-285 contributes to the NAD(+) binding site; that stretch reads GSAPDIAGKNKAN.

The protein belongs to the isocitrate and isopropylmalate dehydrogenases family. LeuB type 1 subfamily. As to quaternary structure, homodimer. The cofactor is Mg(2+). Requires Mn(2+) as cofactor.

The protein localises to the cytoplasm. The enzyme catalyses (2R,3S)-3-isopropylmalate + NAD(+) = 4-methyl-2-oxopentanoate + CO2 + NADH. The protein operates within amino-acid biosynthesis; L-leucine biosynthesis; L-leucine from 3-methyl-2-oxobutanoate: step 3/4. Functionally, catalyzes the oxidation of 3-carboxy-2-hydroxy-4-methylpentanoate (3-isopropylmalate) to 3-carboxy-4-methyl-2-oxopentanoate. The product decarboxylates to 4-methyl-2 oxopentanoate. In Bacillus cereus (strain ATCC 14579 / DSM 31 / CCUG 7414 / JCM 2152 / NBRC 15305 / NCIMB 9373 / NCTC 2599 / NRRL B-3711), this protein is 3-isopropylmalate dehydrogenase.